The following is a 392-amino-acid chain: Xylose operon regulatory protein (392 aa).

One can recognise an HTH araC/xylS-type domain in the interval 288–386 (IQAMHYIRNH…DTTPKEYRDV (99 aa)). 2 DNA-binding regions (H-T-H motif) span residues 305–326 (DQVL…KEEV) and 353–376 (INEI…KKAY).

Functionally, regulatory protein for the xylBAFGHR operon. The chain is Xylose operon regulatory protein (xylR) from Escherichia coli O157:H7.